We begin with the raw amino-acid sequence, 401 residues long: Ufm1-specific protease 2 (401 aa).

Residues Cys234, Asp358, and His360 contribute to the active site.

It belongs to the peptidase C78 family.

The protein resides in the endoplasmic reticulum. It is found in the cytoplasm. It localises to the nucleus. Thiol-dependent isopeptidase that specifically cleaves UFM1, a ubiquitin-like modifier protein, from conjugated proteins. While it is also able to mediate the processing of UFM1 precursors, a prerequisite for conjugation reactions, ufsp2 mainly acts as a protein deUFMylase that mediates deconjugation of UFM1 from target proteins. This chain is Ufm1-specific protease 2, found in Danio rerio (Zebrafish).